A 183-amino-acid polypeptide reads, in one-letter code: Peptide deformylase (183 aa).

Fe cation-binding residues include C90 and H132. The active site involves E133. H136 contacts Fe cation.

Belongs to the polypeptide deformylase family. Fe(2+) serves as cofactor.

The enzyme catalyses N-terminal N-formyl-L-methionyl-[peptide] + H2O = N-terminal L-methionyl-[peptide] + formate. Functionally, removes the formyl group from the N-terminal Met of newly synthesized proteins. Requires at least a dipeptide for an efficient rate of reaction. N-terminal L-methionine is a prerequisite for activity but the enzyme has broad specificity at other positions. This chain is Peptide deformylase, found in Parafrankia sp. (strain EAN1pec).